The following is a 182-amino-acid chain: Small ribosomal subunit protein uS5 (182 aa).

The 64-residue stretch at 16–79 folds into the S5 DRBM domain; sequence FVDRLVHINR…ESAKRGMIYV (64 aa).

The protein belongs to the universal ribosomal protein uS5 family. Part of the 30S ribosomal subunit. Contacts proteins S4 and S8.

In terms of biological role, with S4 and S12 plays an important role in translational accuracy. Its function is as follows. Located at the back of the 30S subunit body where it stabilizes the conformation of the head with respect to the body. The sequence is that of Small ribosomal subunit protein uS5 from Bartonella henselae (strain ATCC 49882 / DSM 28221 / CCUG 30454 / Houston 1) (Rochalimaea henselae).